A 97-amino-acid polypeptide reads, in one-letter code: Sm-like protein LSM3A (97 aa).

Ser2 carries the N-acetylserine modification. The region spanning 11–96 is the Sm domain; the sequence is EPLDLIRLSI…VILVSPPLRT (86 aa).

It belongs to the snRNP Sm proteins family. Component of the heptameric LSM1-LSM7 complex that forms a seven-membered ring structure with a donut shape. The LSM subunits are arranged in the order LSM1, LSM2, LSM3, LSM6, LSM5, LSM7 and LSM4. Component of the heptameric LSM2-LSM8 complex that forms a seven-membered ring structure with a donut shape. The LSM subunits are arranged in the order LSM8, LSM2, LSM3, LSM6, LSM5, LSM7 and LSM4. LSM3A subunit interacts only with its two neighboring subunits, LSM2 and LSM6A or LSM6B. Expressed in roots, leaves, stems, flowers and siliques.

The protein localises to the cytoplasm. It localises to the nucleus. Functionally, component of LSM protein complexes, which are involved in RNA processing. Component of the cytoplasmic LSM1-LSM7 complex which is involved in mRNA degradation by promoting decapping and leading to accurate 5'-3' mRNA decay. The cytoplasmic LSM1-LSM7 complex regulates developmental gene expression by the decapping of specific development-related transcripts. Component of the nuclear LSM2-LSM8 complex which is involved splicing nuclear mRNAs. LSM2-LSM8 binds directly to the U6 small nuclear RNAs (snRNAs) and is essential for accurate splicing of selected development-related mRNAs through the stabilization of the spliceosomal U6 snRNA. Plays a critical role in the regulation of development-related gene expression. The polypeptide is Sm-like protein LSM3A (Arabidopsis thaliana (Mouse-ear cress)).